The sequence spans 254 residues: Membrane protein US20 (254 aa).

Transmembrane regions (helical) follow at residues 31-51 (AIFI…WLGF), 62-82 (YSFF…YTLG), 89-109 (ATVL…FQMC), 114-134 (VLVG…GLAF), 143-163 (WKCI…LALL), 178-198 (AFSI…VIFF), and 208-228 (AVCL…MLSG).

It is found in the host membrane. This Homo sapiens (Human) protein is Membrane protein US20 (US20).